The following is a 217-amino-acid chain: Cytidylate kinase (217 aa).

Position 10 to 18 (10 to 18 (GPAGAGKST)) interacts with ATP.

It belongs to the cytidylate kinase family. Type 1 subfamily.

The protein resides in the cytoplasm. It catalyses the reaction CMP + ATP = CDP + ADP. The catalysed reaction is dCMP + ATP = dCDP + ADP. The chain is Cytidylate kinase from Clostridium botulinum (strain ATCC 19397 / Type A).